A 221-amino-acid chain; its full sequence is Small ribosomal subunit protein uS5 (221 aa).

Positions 46 to 109 (LKDEVIDIKR…INAKLNIMEI (64 aa)) constitute an S5 DRBM domain.

The protein belongs to the universal ribosomal protein uS5 family. In terms of assembly, part of the 30S ribosomal subunit. Contacts protein S4.

Functionally, with S4 and S12 plays an important role in translational accuracy. The polypeptide is Small ribosomal subunit protein uS5 (Thermoplasma acidophilum (strain ATCC 25905 / DSM 1728 / JCM 9062 / NBRC 15155 / AMRC-C165)).